The chain runs to 188 residues: GMP synthase [glutamine-hydrolyzing] subunit A (188 aa).

A Glutamine amidotransferase type-1 domain is found at 1 to 188 (MIVILNNGGQ…FCKVCGLLGE (188 aa)). Cys76 functions as the Nucleophile in the catalytic mechanism. Active-site residues include His163 and Glu165.

As to quaternary structure, heterodimer composed of a glutamine amidotransferase subunit (A) and a GMP-binding subunit (B).

The catalysed reaction is XMP + L-glutamine + ATP + H2O = GMP + L-glutamate + AMP + diphosphate + 2 H(+). Its pathway is purine metabolism; GMP biosynthesis; GMP from XMP (L-Gln route): step 1/1. Catalyzes the synthesis of GMP from XMP. The chain is GMP synthase [glutamine-hydrolyzing] subunit A from Methanococcus aeolicus (strain ATCC BAA-1280 / DSM 17508 / OCM 812 / Nankai-3).